The primary structure comprises 452 residues: MGFNIAMLCDFFYPQLGGVEFHIYHLSQKLIDLGHSVVIITHAYKDRVGVRHLTNGLKVYHVPFFVIFRETTFPTVFSTFPIIRNILLREQIQIVHSHGSASTFAHEGILHANTMGLRTVFTDHSLYGFNNLTSIWVNKLLTFTLTNIDRVICVSNTCKENMIVRTELSPDIISVIPNAVVSEDFKPRDPTDSTKRKQSRDKIVIVVIGRLFPNKGSDLLTRIIPKVCSSHEDVEFIVAGDGPKFIDFQQMIESHRLQKRVQLLGSVPHEKVRDVLCQGDIYLHASLTEAFGTILVEAASCNLLIVTTQVGGIPEVLPNEMTVYAEQTSVSDLVQATNKAINIIRSKALDTSSFHDSVSKMYDWMDVAKRTVEIYTNISSTSSADDKDWMKMVANLYKRDGIWAKHLYLLCGIVEYMLFFLLEWLYPRDEIDLAPKWPKKSVSNETKEARET.

Residues 407–427 (LYLLCGIVEYMLFFLLEWLYP) traverse the membrane as a helical segment.

Belongs to the glycosyltransferase group 1 family. As to quaternary structure, component of the phosphatidylinositol N-acetylglucosaminyltransferase complex composed of at least GPI1, GPI2, GPI3, GPI15, GPI19 and ERI1.

The protein localises to the endoplasmic reticulum membrane. The enzyme catalyses a 1,2-diacyl-sn-glycero-3-phospho-(1D-myo-inositol) + UDP-N-acetyl-alpha-D-glucosamine = a 6-(N-acetyl-alpha-D-glucosaminyl)-1-(1,2-diacyl-sn-glycero-3-phospho)-1D-myo-inositol + UDP + H(+). It participates in glycolipid biosynthesis; glycosylphosphatidylinositol-anchor biosynthesis. Inhibited by Ras, probably via the interaction between RAS2 and ERI1. Catalytic subunit in the complex catalyzing the transfer of N-acetylglucosamine from UDP-N-acetylglucosamine to phosphatidylinositol, the first step of GPI biosynthesis. In Saccharomyces cerevisiae (strain YJM789) (Baker's yeast), this protein is Phosphatidylinositol N-acetylglucosaminyltransferase GPI3 subunit (SPT14).